The following is a 433-amino-acid chain: Glutamate-rich protein 2 (433 aa).

Disordered regions lie at residues 56–86 (VPAAGTAPAPPPPRALRPAPGPPRSAPLAPP), 113–161 (DSAS…KHPQ), 189–273 (SRQN…SIET), 308–344 (CLEDIEENLSDSTDGDGEEDSNNEDDEGPAKKETRAP), and 394–433 (EKAQEEEEEEESDEDSSSESEVDSSEDGSEDSSDECEDGS). Over residues 63-85 (PAPPPPRALRPAPGPPRSAPLAP) the composition is skewed to pro residues. A compositionally biased stretch (polar residues) spans 114-127 (SASQARGSEPSSSA). Basic and acidic residues-rich tracts occupy residues 199 to 214 (DPKEKLMSGSNKEKPQ) and 244 to 258 (ARKETSSKKIEDKVS). Over residues 259-273 (LKSSENRPSSRSIET) the composition is skewed to polar residues. Composition is skewed to acidic residues over residues 308-334 (CLEDIEENLSDSTDGDGEEDSNNEDDE) and 397-433 (QEEEEEEESDEDSSSESEVDSSEDGSEDSSDECEDGS).

This chain is Glutamate-rich protein 2 (Erich2), found in Rattus norvegicus (Rat).